The chain runs to 199 residues: uncharacterized protein (199 aa).

The N-terminal stretch at 1–23 (MSARAPKELRLALPPCLLNRTFA) is a signal peptide. N-linked (GlcNAc...) asparagine glycosylation is found at N19 and N26. Topologically, residues 24 to 60 (SHNASGGSSAGLRSSGAGGGTCITQVGQQLFQSFSST) are extracellular. Residues 61–81 (LVLIVLVTLIFCLLVLSLSTF) traverse the membrane as a helical segment. The Cytoplasmic portion of the chain corresponds to 82–199 (HIHKRRMKKR…EGLLQTVVLS (118 aa)). Residues 93–190 (MQRAQEEYER…ASSCLDTPGE (98 aa)) form a disordered region. 2 stretches are compositionally biased toward basic and acidic residues: residues 95-106 (RAQEEYERDHCS) and 124-135 (HGKETRLERQPR). The span at 147–163 (SSSSSSSSSPGLLCQGP) shows a compositional bias: low complexity. The span at 164–176 (CAPPPPLPAPTPQ) shows a compositional bias: pro residues.

It localises to the membrane. This is an uncharacterized protein from Mus musculus (Mouse).